Reading from the N-terminus, the 518-residue chain is Probable Xaa-Pro aminopeptidase HCDG_07916 (518 aa).

Residues Asp-289, Asp-300, Glu-437, and Glu-475 each contribute to the Mn(2+) site.

Belongs to the peptidase M24B family. Mn(2+) serves as cofactor.

It catalyses the reaction Release of any N-terminal amino acid, including proline, that is linked to proline, even from a dipeptide or tripeptide.. Its function is as follows. Catalyzes the removal of a penultimate prolyl residue from the N-termini of peptides. The sequence is that of Probable Xaa-Pro aminopeptidase HCDG_07916 from Ajellomyces capsulatus (strain H143) (Darling's disease fungus).